A 323-amino-acid chain; its full sequence is PTS system mannose-specific EIIAB component (323 aa).

Residues 2 to 124 form the PTS EIIA type-4 domain; the sequence is TIAIVIGTHG…VALAVETGRE (123 aa). Residue His-10 is the Tele-phosphohistidine intermediate; for EIIA activity of the active site. His-10 carries the post-translational modification Phosphohistidine; by HPr. Lys-55 is modified (N6-acetyllysine). The segment at 137 to 155 is hinge; sequence AAPAPAAAAPKAAPTPAKP. The PTS EIIB type-4 domain occupies 157-320; sequence GPNDYMVIGL…KLKMMDLISK (164 aa). Residue His-175 is the Pros-phosphohistidine intermediate; for EIIB activity of the active site. His-175 is subject to Phosphohistidine; by EIIA. An N6-acetyllysine modification is found at Lys-234.

Homodimer.

It localises to the cytoplasm. It is found in the cell inner membrane. The catalysed reaction is D-mannose(out) + N(pros)-phospho-L-histidyl-[protein] = D-mannose 6-phosphate(in) + L-histidyl-[protein]. The phosphoenolpyruvate-dependent sugar phosphotransferase system (sugar PTS), a major carbohydrate active transport system, catalyzes the phosphorylation of incoming sugar substrates concomitantly with their translocation across the cell membrane. The enzyme II ManXYZ PTS system is involved in mannose transport. The sequence is that of PTS system mannose-specific EIIAB component (manX) from Escherichia coli O157:H7.